A 528-amino-acid chain; its full sequence is Sodium-dependent lysophosphatidylcholine symporter 1 (528 aa).

Topologically, residues 1-37 (MAGGGGAERVRVGAAAAGLLPPSCRQPRRRESRERLS) are cytoplasmic. The helical transmembrane segment at 38 to 66 (VCSKLCYAVGGAPYQTTGCALGFFLQIYL) threads the bilayer. Residues 67 to 73 (LDVAQLD) are Extracellular-facing. The chain crosses the membrane as a helical span at residues 74–99 (PFYASIILFVGRAWDAITDPMVGFFI). Residues 100-109 (SKTPWTRFGR) lie on the Cytoplasmic side of the membrane. A helical membrane pass occupies residues 110–129 (LMPWIIFSTPFAVISYFLIW). Topologically, residues 130 to 138 (FVPDISTGQ) are extracellular. A helical membrane pass occupies residues 139 to 161 (VMWYLIFYCIFQTLVTCFHVPYS). Topologically, residues 162-176 (ALTMFISREQSERDS) are cytoplasmic. The chain crosses the membrane as a helical span at residues 177-199 (ATAYRMTVEVLGTVLGTAIQGQI). At 200 to 241 (VGKAVTPCIENPPFLSETNFSVAIRNVNMTHYTGSLADTRNA) the chain is on the extracellular side. Residues cysteine 207 and cysteine 460 are joined by a disulfide bond. N-linked (GlcNAc...) asparagine glycans are attached at residues asparagine 218 and asparagine 227. A helical membrane pass occupies residues 242 to 263 (YMVAAGVIGGLYILCAVILSVG). The Cytoplasmic segment spans residues 264–295 (VREKRESSELQSDEPVSFFRGLKLVMNHGAYI). Residues 296–319 (KLITGFLFTSLAFMLLEGNFALFC) traverse the membrane as a helical segment. Topologically, residues 320-328 (TYTLGFRNE) are extracellular. Residues 329-351 (FQNILLAIMLSATLTIPFWQWFL) form a helical membrane-spanning segment. Topologically, residues 352-355 (TRFG) are cytoplasmic. A helical transmembrane segment spans residues 356-376 (KKTAVYVGISSAVPFLITVVV). At 377–381 (LDSNL) the chain is on the extracellular side. Residues 382–404 (VVTYIVAVAAGISVAAAFLLPWS) traverse the membrane as a helical segment. The Cytoplasmic segment spans residues 405–427 (MLPDVIDDFKLQHPESRGHEAIF). The helical transmembrane segment at 428–450 (FSFYVFFTKFTSGVSLGISTLSL) threads the bilayer. The Extracellular portion of the chain corresponds to 451–467 (DFAGYQTRGCSQPSEVN). Residues 468 to 490 (ITLKLLVSAVPVGLILLGLLLFK) traverse the membrane as a helical segment. Residues 491–528 (LYPIDEEKRRENKKALQDLREESNSSSESDSTELANIV) are Cytoplasmic-facing. Residues 503–513 (KKALQDLREES) are compositionally biased toward basic and acidic residues. A disordered region spans residues 503 to 528 (KKALQDLREESNSSSESDSTELANIV). Residues 514–528 (NSSSESDSTELANIV) are compositionally biased toward low complexity.

The protein belongs to the major facilitator superfamily.

It localises to the cell membrane. The protein resides in the endoplasmic reticulum membrane. It carries out the reaction a 1-acyl-sn-glycero-3-phosphocholine(in) + Na(+)(in) = a 1-acyl-sn-glycero-3-phosphocholine(out) + Na(+)(out). It catalyses the reaction 1-(4Z,7Z,10Z,13Z,16Z,19Z-docosahexaenoyl)-sn-glycero-3-phosphocholine(in) + Na(+)(in) = 1-(4Z,7Z,10Z,13Z,16Z,19Z-docosahexaenoyl)-sn-glycero-3-phosphocholine(out) + Na(+)(out). The enzyme catalyses 1-(9Z-octadecenoyl)-sn-glycero-3-phosphocholine(in) + Na(+)(in) = 1-(9Z-octadecenoyl)-sn-glycero-3-phosphocholine(out) + Na(+)(out). The catalysed reaction is 1-hexadecanoyl-sn-glycero-3-phosphocholine(in) + Na(+)(in) = 1-hexadecanoyl-sn-glycero-3-phosphocholine(out) + Na(+)(out). It carries out the reaction a 1-acyl-sn-glycero-3-phosphoethanolamine(in) + Na(+)(in) = a 1-acyl-sn-glycero-3-phosphoethanolamine(out) + Na(+)(out). Sodium-dependent lysophosphatidylcholine (LPC) symporter, which plays an essential role for blood-brain barrier formation and function. Specifically expressed in endothelium of the blood-brain barrier of micro-vessels and transports LPC into the brain. Transport of LPC is essential because it constitutes the major mechanism by which docosahexaenoic acid (DHA), an omega-3 fatty acid that is essential for normal brain growth and cognitive function, enters the brain. Transports LPC carrying long-chain fatty acids such LPC oleate and LPC palmitate with a minimum acyl chain length of 14 carbons. Does not transport docosahexaenoic acid in unesterified fatty acid. In Gallus gallus (Chicken), this protein is Sodium-dependent lysophosphatidylcholine symporter 1.